The primary structure comprises 182 residues: Small ribosomal subunit protein uS4c (182 aa).

Positions Gly-13–Gly-32 are disordered. One can recognise an S4 RNA-binding domain in the interval Met-82–Asn-143.

It belongs to the universal ribosomal protein uS4 family. In terms of assembly, part of the 30S ribosomal subunit. Contacts protein S5. The interaction surface between S4 and S5 is involved in control of translational fidelity.

It localises to the plastid. Its subcellular location is the chloroplast. One of the primary rRNA binding proteins, it binds directly to 16S rRNA where it nucleates assembly of the body of the 30S subunit. In terms of biological role, with S5 and S12 plays an important role in translational accuracy. This Scadoxus puniceus (Paintbrush lily) protein is Small ribosomal subunit protein uS4c (rps4).